Reading from the N-terminus, the 454-residue chain is uncharacterized protein (454 aa).

Residues methionine 1–lysine 45 form the TRAM domain. Cysteine 58, cysteine 64, cysteine 67, and cysteine 160 together coordinate [4Fe-4S] cluster. Residues glutamine 286, tyrosine 315, glutamate 336, and aspartate 385 each contribute to the S-adenosyl-L-methionine site. Residue cysteine 412 is the Nucleophile of the active site.

This sequence belongs to the class I-like SAM-binding methyltransferase superfamily. RNA M5U methyltransferase family.

This is an uncharacterized protein from Bacteroides thetaiotaomicron (strain ATCC 29148 / DSM 2079 / JCM 5827 / CCUG 10774 / NCTC 10582 / VPI-5482 / E50).